The sequence spans 228 residues: DNA-binding response regulator MtrA (228 aa).

Positions 7 to 120 (RILVVDDDAS…ELVARVRARL (114 aa)) constitute a Response regulatory domain. Asp-56 carries the post-translational modification 4-aspartylphosphate. The ompR/PhoB-type DNA-binding region spans 128-227 (AEMLSIADVE…VRGVGYKAGP (100 aa)).

In terms of processing, phosphorylated by MtrB.

Member of the two-component regulatory system MtrA/MtrB. In Mycobacterium bovis (strain ATCC BAA-935 / AF2122/97), this protein is DNA-binding response regulator MtrA (mtrA).